Here is a 182-residue protein sequence, read N- to C-terminus: dCTP deaminase, dUMP-forming (182 aa).

Residues 96–101 (RSSIGR), aspartate 113, 121–123 (TLE), glutamine 142, tyrosine 156, and glutamine 163 each bind dCTP. The Proton donor/acceptor role is filled by glutamate 123.

This sequence belongs to the dCTP deaminase family. Homotrimer.

It carries out the reaction dCTP + 2 H2O = dUMP + NH4(+) + diphosphate. Its pathway is pyrimidine metabolism; dUMP biosynthesis; dUMP from dCTP: step 1/1. Bifunctional enzyme that catalyzes both the deamination of dCTP to dUTP and the hydrolysis of dUTP to dUMP without releasing the toxic dUTP intermediate. The chain is dCTP deaminase, dUMP-forming from Halothermothrix orenii (strain H 168 / OCM 544 / DSM 9562).